Reading from the N-terminus, the 499-residue chain is Glycerol kinase (499 aa).

Thr-15 is a binding site for ADP. Residues Thr-15, Thr-16, and Ser-17 each contribute to the ATP site. Thr-15 is a binding site for sn-glycerol 3-phosphate. Arg-19 lines the ADP pocket. Positions 85, 86, 137, and 246 each coordinate sn-glycerol 3-phosphate. The glycerol site is built by Arg-85, Glu-86, Tyr-137, Asp-246, and Gln-247. Thr-268 and Gly-311 together coordinate ADP. ATP is bound by residues Thr-268, Gly-311, Gln-315, and Gly-412. The ADP site is built by Gly-412 and Asn-416.

It belongs to the FGGY kinase family.

It carries out the reaction glycerol + ATP = sn-glycerol 3-phosphate + ADP + H(+). The protein operates within polyol metabolism; glycerol degradation via glycerol kinase pathway; sn-glycerol 3-phosphate from glycerol: step 1/1. With respect to regulation, inhibited by fructose 1,6-bisphosphate (FBP). Its function is as follows. Key enzyme in the regulation of glycerol uptake and metabolism. Catalyzes the phosphorylation of glycerol to yield sn-glycerol 3-phosphate. In Parabacteroides distasonis (strain ATCC 8503 / DSM 20701 / CIP 104284 / JCM 5825 / NCTC 11152), this protein is Glycerol kinase.